Reading from the N-terminus, the 430-residue chain is Serine--tRNA ligase (430 aa).

Thr-237–Glu-239 contacts L-serine. Arg-268 to Glu-270 is a binding site for ATP. Glu-291 contacts L-serine. Glu-355–Ser-358 is a binding site for ATP. Ser-391 lines the L-serine pocket.

Belongs to the class-II aminoacyl-tRNA synthetase family. Type-1 seryl-tRNA synthetase subfamily. Homodimer. The tRNA molecule binds across the dimer.

It localises to the cytoplasm. The catalysed reaction is tRNA(Ser) + L-serine + ATP = L-seryl-tRNA(Ser) + AMP + diphosphate + H(+). It carries out the reaction tRNA(Sec) + L-serine + ATP = L-seryl-tRNA(Sec) + AMP + diphosphate + H(+). It functions in the pathway aminoacyl-tRNA biosynthesis; selenocysteinyl-tRNA(Sec) biosynthesis; L-seryl-tRNA(Sec) from L-serine and tRNA(Sec): step 1/1. Its function is as follows. Catalyzes the attachment of serine to tRNA(Ser). Is also able to aminoacylate tRNA(Sec) with serine, to form the misacylated tRNA L-seryl-tRNA(Sec), which will be further converted into selenocysteinyl-tRNA(Sec). This is Serine--tRNA ligase from Salmonella paratyphi C (strain RKS4594).